The following is a 241-amino-acid chain: Alpha/beta-tubulin-N-acetyltransferase 9 (241 aa).

The region spanning 34-181 is the N-acetyltransferase domain; it reads EELRHLTASE…VTLRLAVSEP (148 aa).

This sequence belongs to the acetyltransferase family. GNAT subfamily.

It carries out the reaction N-terminal L-methionyl-[tubulin] + acetyl-CoA = N-terminal N(alpha)-acetyl-L-methionyl-[tubulin] + CoA + H(+). N-acetyltransferase that mediates the acetylation of the N-terminal residues of alpha- and beta-tubulin. This Mus musculus (Mouse) protein is Alpha/beta-tubulin-N-acetyltransferase 9 (Nat9).